Consider the following 238-residue polypeptide: Aerobic respiration control protein ArcA (238 aa).

In terms of domain architecture, Response regulatory spans 5-118; sequence HILIVEDELV…ELTIRARNLL (114 aa). D54 bears the 4-aspartylphosphate mark. The segment at residues 134-234 is a DNA-binding region (ompR/PhoB-type); the sequence is VESYKFNGWE…IHGEGYRFCG (101 aa).

In terms of processing, phosphorylated by ArcB.

The protein localises to the cytoplasm. Functionally, member of the two-component regulatory system ArcB/ArcA. Represses a wide variety of aerobic enzymes under anaerobic conditions. It may also be involved in the osmoregulation of envelope proteins. When activated by ArcB, it negatively regulates the expression of genes of aerobic function. Activates the transcription of the plfB operon by binding to its promoter. The sequence is that of Aerobic respiration control protein ArcA (arcA) from Escherichia coli O157:H7.